Here is a 285-residue protein sequence, read N- to C-terminus: Tropomyosin alpha-3 chain (285 aa).

A coiled-coil region spans residues 1-285; that stretch reads MMEAIKKKMQ…DHALNDMTSI (285 aa). At M2 the chain carries N-acetylmethionine. M2 bears the N-acetylalanine mark. A compositionally biased stretch (basic and acidic residues) spans 16 to 41; the sequence is KENALDRAEQAEAEQKQAEERSKQLE. Residues 16–44 form a disordered region; it reads KENALDRAEQAEAEQKQAEERSKQLEDEL. T54 is modified (phosphothreonine). Residues S62 and S88 each carry the phosphoserine modification. A Phosphothreonine modification is found at T109. An N6-acetyllysine mark is found at E125 and L177. Position 207 is a phosphoserine (S207). An N6-acetyllysine modification is found at Y215. S216 is modified (phosphoserine). T253 is subject to Phosphothreonine. Y262 is modified (phosphotyrosine). A Phosphoserine modification is found at S272. T283 bears the Phosphothreonine mark. S284 bears the Phosphoserine mark.

This sequence belongs to the tropomyosin family. In terms of assembly, homodimer. Heterodimer of an alpha (TPM1, TPM3 or TPM4) and a beta (TPM2) chain. Interacts with TMOD1. Interacts with TNNT1.

It is found in the cytoplasm. The protein localises to the cytoskeleton. Binds to actin filaments in muscle and non-muscle cells. Plays a central role, in association with the troponin complex, in the calcium dependent regulation of vertebrate striated muscle contraction. Smooth muscle contraction is regulated by interaction with caldesmon. In non-muscle cells is implicated in stabilizing cytoskeleton actin filaments. The sequence is that of Tropomyosin alpha-3 chain (TPM3) from Homo sapiens (Human).